Consider the following 233-residue polypeptide: Small ribosomal subunit protein uS3 (233 aa).

In terms of domain architecture, KH type-2 spans 39–107 (IRTFLKRKLY…EVNINIKEER (69 aa)). The interval 211 to 233 (GVQPEKTEESAPAKKPRRARRGK) is disordered. Positions 213-222 (QPEKTEESAP) are enriched in basic and acidic residues. Positions 224-233 (KKPRRARRGK) are enriched in basic residues.

This sequence belongs to the universal ribosomal protein uS3 family. In terms of assembly, part of the 30S ribosomal subunit. Forms a tight complex with proteins S10 and S14.

Functionally, binds the lower part of the 30S subunit head. Binds mRNA in the 70S ribosome, positioning it for translation. The polypeptide is Small ribosomal subunit protein uS3 (Campylobacter lari (strain RM2100 / D67 / ATCC BAA-1060)).